The following is a 108-amino-acid chain: Alkyltransferase-like protein 1 (108 aa).

This sequence belongs to the MGMT family. ATL subfamily.

Involved in DNA damage recognition. Binds DNA containing O(6)-methylguanine and larger O(6)-alkylguanine adducts. The DNA is bent, the damaged base is rotated out of the DNA duplex into a hydrophobic binding pocket (nucleotide flipping), with Arg-39 donating a hydrogen bond to the orphaned cytosine to stabilize the extrahelical DNA conformation. This structural change in DNA presents the lesion to the nucleotide excision repair (NER) pathway. The affinity for O(6)-alkylguanine adducts increases with the size of the alkyl group. Low affinity small O(6)-alkylguanines are directed to the global genome repair pathway of NER via rhp7-rhp16 and rhp41-rhp23, while strong binding to bulky O(6)-alkylguanines stalls the transcription machinery and diverts the damage to the transcription-coupled repair pathway of NER via rhp26. This Schizosaccharomyces pombe (strain 972 / ATCC 24843) (Fission yeast) protein is Alkyltransferase-like protein 1.